Here is a 287-residue protein sequence, read N- to C-terminus: Putative DNA-3-methyladenine glycosylase YfjP (287 aa).

D242 functions as the Proton acceptor in the catalytic mechanism.

It belongs to the alkylbase DNA glycosidase AlkA family.

It catalyses the reaction Hydrolysis of alkylated DNA, releasing 3-methyladenine, 3-methylguanine, 7-methylguanine and 7-methyladenine.. Hydrolysis of the deoxyribose N-glycosidic bond to excise 3-methyladenine, 3-methylguanine, 7-methylguanine, O2-methylthymine, and O2-methylcytosine from the damaged DNA polymer formed by alkylation lesions. This Bacillus subtilis (strain 168) protein is Putative DNA-3-methyladenine glycosylase YfjP (yfjP).